The primary structure comprises 385 residues: Acetylornithine aminotransferase (385 aa).

Pyridoxal 5'-phosphate is bound by residues 95–96 and Phe122; that span reads GA. Arg125 contacts N(2)-acetyl-L-ornithine. Position 208-211 (208-211) interacts with pyridoxal 5'-phosphate; that stretch reads DEIQ. At Lys237 the chain carries N6-(pyridoxal phosphate)lysine. Thr265 is a N(2)-acetyl-L-ornithine binding site. Thr266 is a pyridoxal 5'-phosphate binding site.

It belongs to the class-III pyridoxal-phosphate-dependent aminotransferase family. ArgD subfamily. Homodimer. Requires pyridoxal 5'-phosphate as cofactor.

The protein localises to the cytoplasm. It carries out the reaction N(2)-acetyl-L-ornithine + 2-oxoglutarate = N-acetyl-L-glutamate 5-semialdehyde + L-glutamate. Its pathway is amino-acid biosynthesis; L-arginine biosynthesis; N(2)-acetyl-L-ornithine from L-glutamate: step 4/4. The chain is Acetylornithine aminotransferase from Bacillus subtilis (strain 168).